The sequence spans 348 residues: Aspartate carbamoyltransferase catalytic subunit (348 aa).

2 residues coordinate carbamoyl phosphate: R59 and T60. K87 lines the L-aspartate pocket. Residues R109, H142, and Q145 each coordinate carbamoyl phosphate. The L-aspartate site is built by R182 and R253. Residues G294 and P295 each contribute to the carbamoyl phosphate site.

Belongs to the aspartate/ornithine carbamoyltransferase superfamily. ATCase family. In terms of assembly, heterododecamer (2C3:3R2) of six catalytic PyrB chains organized as two trimers (C3), and six regulatory PyrI chains organized as three dimers (R2).

It catalyses the reaction carbamoyl phosphate + L-aspartate = N-carbamoyl-L-aspartate + phosphate + H(+). The protein operates within pyrimidine metabolism; UMP biosynthesis via de novo pathway; (S)-dihydroorotate from bicarbonate: step 2/3. Catalyzes the condensation of carbamoyl phosphate and aspartate to form carbamoyl aspartate and inorganic phosphate, the committed step in the de novo pyrimidine nucleotide biosynthesis pathway. This is Aspartate carbamoyltransferase catalytic subunit from Prochlorococcus marinus (strain MIT 9303).